The primary structure comprises 859 residues: Leucine--tRNA ligase (859 aa).

The short motif at 42–52 is the 'HIGH' region element; that stretch reads PYPSGRLHMGH. Positions 618–622 match the 'KMSKS' region motif; it reads KMSKS. Lys621 contributes to the ATP binding site.

Belongs to the class-I aminoacyl-tRNA synthetase family.

It localises to the cytoplasm. The enzyme catalyses tRNA(Leu) + L-leucine + ATP = L-leucyl-tRNA(Leu) + AMP + diphosphate. The chain is Leucine--tRNA ligase from Shewanella sp. (strain ANA-3).